The chain runs to 104 residues: Nucleoid-associated protein GAU_1113 (104 aa).

The protein belongs to the YbaB/EbfC family. In terms of assembly, homodimer.

The protein localises to the cytoplasm. The protein resides in the nucleoid. In terms of biological role, binds to DNA and alters its conformation. May be involved in regulation of gene expression, nucleoid organization and DNA protection. This chain is Nucleoid-associated protein GAU_1113, found in Gemmatimonas aurantiaca (strain DSM 14586 / JCM 11422 / NBRC 100505 / T-27).